We begin with the raw amino-acid sequence, 479 residues long: Glycogen synthase (479 aa).

K15 is an ADP-alpha-D-glucose binding site.

It belongs to the glycosyltransferase 1 family. Bacterial/plant glycogen synthase subfamily.

The enzyme catalyses [(1-&gt;4)-alpha-D-glucosyl](n) + ADP-alpha-D-glucose = [(1-&gt;4)-alpha-D-glucosyl](n+1) + ADP + H(+). The protein operates within glycan biosynthesis; glycogen biosynthesis. Its function is as follows. Synthesizes alpha-1,4-glucan chains using ADP-glucose. In Pectobacterium carotovorum subsp. carotovorum (strain PC1), this protein is Glycogen synthase.